The following is a 41-amino-acid chain: MKDFLTYLSTAPVITAIWLGITAGILIEFNRFFPDLLFHPL.

Residues 7-27 (YLSTAPVITAIWLGITAGILI) form a helical membrane-spanning segment.

It belongs to the PsaJ family.

Its subcellular location is the cellular thylakoid membrane. May help in the organization of the PsaE and PsaF subunits. This chain is Photosystem I reaction center subunit IX, found in Cyanothece sp. (strain PCC 7425 / ATCC 29141).